The following is a 359-amino-acid chain: Aromatic amino acid aminotransferase (359 aa).

Residues 1 to 42 (MSERKPPYLRSALDSIPPYRPGRKVVGPDGRSAKLSSNESPF) form a disordered region. K223 carries the post-translational modification N6-(pyridoxal phosphate)lysine.

The protein belongs to the class-II pyridoxal-phosphate-dependent aminotransferase family. Homodimer. Requires pyridoxal 5'-phosphate as cofactor.

It catalyses the reaction an aromatic L-alpha-amino acid + 2-oxoglutarate = an aromatic oxo-acid + L-glutamate. Functionally, aminotransferase that catalyzes the conversion of aromatic amino acids and 2-oxoglutarate into corresponding aromatic oxo acids and L-glutamate. The sequence is that of Aromatic amino acid aminotransferase from Thermobifida fusca (strain YX).